A 161-amino-acid polypeptide reads, in one-letter code: DNA-directed RNA polymerase III subunit RPC9 (161 aa).

Residues 75–96 are disordered; the sequence is QEDEGEERESSGAKDAEKSGIS. A compositionally biased stretch (basic and acidic residues) spans 82 to 96; sequence RESSGAKDAEKSGIS.

It belongs to the eukaryotic RPC9 RNA polymerase subunit family. In terms of assembly, component of the RNA polymerase III (Pol III) complex consisting of 17 subunits. Forms a Pol III subcomplex with RPC25/RPC8. Interacts with BURF1/TDS4.

It is found in the nucleus. Its function is as follows. DNA-dependent RNA polymerase catalyzes the transcription of DNA into RNA using the four ribonucleoside triphosphates as substrates. Specific peripheric component of RNA polymerase III which synthesizes small RNAs, such as 5S rRNA and tRNAs. The RPC25/RPC8-RPC17/RPC9 subcomplex may bind Pol III transcripts emerging from the adjacent exit pore during elongation. The chain is DNA-directed RNA polymerase III subunit RPC9 (RPC17) from Saccharomyces cerevisiae (strain ATCC 204508 / S288c) (Baker's yeast).